Reading from the N-terminus, the 87-residue chain is MANIKSAKKRIKVIETKTLRNKVIKSKVKTLVKKVEVAVAASDKDLATKSLKDAVVAIDKAASKGVYHKKNAARKVGRLAKAVNSIA.

It belongs to the bacterial ribosomal protein bS20 family.

Functionally, binds directly to 16S ribosomal RNA. This is Small ribosomal subunit protein bS20 from Lachnoclostridium phytofermentans (strain ATCC 700394 / DSM 18823 / ISDg) (Clostridium phytofermentans).